A 117-amino-acid chain; its full sequence is Large ribosomal subunit protein uL18 (117 aa).

It belongs to the universal ribosomal protein uL18 family. In terms of assembly, part of the 50S ribosomal subunit; part of the 5S rRNA/L5/L18/L25 subcomplex. Contacts the 5S and 23S rRNAs.

Its function is as follows. This is one of the proteins that bind and probably mediate the attachment of the 5S RNA into the large ribosomal subunit, where it forms part of the central protuberance. This is Large ribosomal subunit protein uL18 from Vibrio cholerae serotype O1 (strain ATCC 39541 / Classical Ogawa 395 / O395).